Here is a 66-residue protein sequence, read N- to C-terminus: Alpha-conotoxin RegIIA (66 aa).

The first 21 residues, 1–21, serve as a signal peptide directing secretion; sequence MGMRMMFTVFLLVVLTTTVVS. Positions 22–49 are excised as a propeptide; that stretch reads STSVRASDGRNAAADNRASDLIAQIVRR. 2 cysteine pairs are disulfide-bonded: C51/C57 and C52/C65. Residues 53–55 form a ser-Xaa-Pro motif, crucial for potent interaction with nAChR region; the sequence is SHP. Cysteine amide is present on C65.

Belongs to the conotoxin A superfamily. In terms of tissue distribution, expressed by the venom duct.

It is found in the secreted. Functionally, alpha-conotoxins act on postsynaptic membranes, they bind to the nicotinic acetylcholine receptors (nAChR) and thus inhibit them. This toxin potently inhibits alpha-3 containing subunit nAChR. It inhibits alpha-3-beta-2/CHRNA3-CHRNB2 (IC(50)=10.7-33 nM (rat)/132.4-704.1 nM (human)) and alpha-3-beta-4/CHRNA3-CHRNB4 (IC(50)=47.3-97 nM (rat)/52.1 nM (human)). It also inhibits alpha-7/CHRNA7 nAChR with IC(50)=103-210 nM (human)/41-61.2 nM (rat) nAChRs. It is more potent on alpha-3-beta-2 receptors in human than in rat, due to a variation (Pro vs Gln) in alpha-3 subunit in these orthologs. Conversely, does not show species-specific differences in sensitivity at the alpha-3-beta-4 receptor. In Conus regius (Crown cone), this protein is Alpha-conotoxin RegIIA.